The sequence spans 909 residues: Epithelial discoidin domain-containing receptor 1 (909 aa).

A signal peptide spans 1 to 18; it reads MGPEALSSLLLLLLVASG. At 21–413 the chain is on the extracellular side; it reads DMKGHFDPAK…VAKAEGSPTA (393 aa). Residues 31–181 enclose the F5/8 type C domain; that stretch reads CRYALGMQDR…VCLRVELYGC (151 aa). 2 disulfide bridges follow: C31–C181 and C70–C173. Residues 45–60 are compositionally biased toward low complexity; it reads SDISASSSWSDSTAAR. The tract at residues 45–65 is disordered; that stretch reads SDISASSSWSDSTAARHSSDG. A DS-like domain region spans residues 188-363; sequence LSYTAPVGQT…LFSEISFISD (176 aa). Ca(2+) contacts are provided by N207, Q226, D229, V231, Y249, and Y251. The N-linked (GlcNAc...) asparagine glycan is linked to N207. An N-linked (GlcNAc...) asparagine glycan is attached at N256. A disulfide bridge connects residues C299 and C344. S356 and E357 together coordinate Ca(2+). N-linked (GlcNAc...) asparagine glycosylation is found at N366 and N390. A helical transmembrane segment spans residues 414 to 434; sequence ILIGCLVAIILLLLLIIALML. Residues 435–909 lie on the Cytoplasmic side of the membrane; that stretch reads WRLHWRRLLS…FLAEDALNTV (475 aa). The segment at 466–495 is disordered; the sequence is ILINNRPGPREPPPYQEPRPRGNPPHSAPC. Residues 475–492 are compositionally biased toward pro residues; it reads REPPPYQEPRPRGNPPHS. Residues 477–480 carry the PPxY motif motif; the sequence is PPPY. Phosphotyrosine; by autocatalysis occurs at positions 480, 509, and 516. One can recognise a Protein kinase domain in the interval 606–901; it reads LRFKEKLGEG…PPFSQLHRFL (296 aa). ATP is bound at residue 612 to 620; it reads LGEGQFGEV. Phosphoserine is present on S627. Residue K651 participates in ATP binding. A Phosphotyrosine; by autocatalysis modification is found at Y736. D762 (proton acceptor) is an active-site residue. Phosphotyrosine; by autocatalysis occurs at positions 788, 792, and 793.

It belongs to the protein kinase superfamily. Tyr protein kinase family. Insulin receptor subfamily. Homodimer. Interacts (via PPxY motif) with WWC1 (via WW domains) in a collagen-regulated manner. Forms a tripartite complex with WWC1 and PRKCZ, but predominantly in the absence of collagen. Interacts (tyrosine phosphorylated) with SHC1. Interacts with SRC. Interacts with MYH9. Interacts with CDH1. Interacts with PTPN11. Interacts with NCK2. Autophosphorylated in response to fibrillar collagen binding.

It is found in the cell membrane. The enzyme catalyses L-tyrosyl-[protein] + ATP = O-phospho-L-tyrosyl-[protein] + ADP + H(+). Tyrosine kinase that functions as a cell surface receptor for fibrillar collagen and regulates cell attachment to the extracellular matrix, remodeling of the extracellular matrix, cell migration, differentiation, survival and cell proliferation. Collagen binding triggers a signaling pathway that involves SRC and leads to the activation of MAP kinases. Regulates remodeling of the extracellular matrix by up-regulation of the matrix metalloproteinases MMP2, MMP7 and MMP9, and thereby facilitates cell migration and wound healing. Promotes smooth muscle cell migration, and thereby contributes to arterial wound healing. Also plays a role in tumor cell invasion. Phosphorylates PTPN11. Required for normal blastocyst implantation during pregnancy, for normal mammary gland differentiation and normal lactation. Required for normal ear morphology and normal hearing. This Pan troglodytes (Chimpanzee) protein is Epithelial discoidin domain-containing receptor 1 (DDR1).